Here is a 122-residue protein sequence, read N- to C-terminus: Small ribosomal subunit protein uS13 (122 aa).

Residues 96-122 (LPCRGQRTHTNARTRKGPRKPIAGKKK) are disordered.

This sequence belongs to the universal ribosomal protein uS13 family. As to quaternary structure, part of the 30S ribosomal subunit. Forms a loose heterodimer with protein S19. Forms two bridges to the 50S subunit in the 70S ribosome.

Functionally, located at the top of the head of the 30S subunit, it contacts several helices of the 16S rRNA. In the 70S ribosome it contacts the 23S rRNA (bridge B1a) and protein L5 of the 50S subunit (bridge B1b), connecting the 2 subunits; these bridges are implicated in subunit movement. Contacts the tRNAs in the A and P-sites. This is Small ribosomal subunit protein uS13 from Magnetococcus marinus (strain ATCC BAA-1437 / JCM 17883 / MC-1).